We begin with the raw amino-acid sequence, 238 residues long: Large ribosomal subunit protein uL1 (238 aa).

This sequence belongs to the universal ribosomal protein uL1 family. Part of the 50S ribosomal subunit.

Binds directly to 23S rRNA. The L1 stalk is quite mobile in the ribosome, and is involved in E site tRNA release. Its function is as follows. Protein L1 is also a translational repressor protein, it controls the translation of the L11 operon by binding to its mRNA. The protein is Large ribosomal subunit protein uL1 of Salinispora tropica (strain ATCC BAA-916 / DSM 44818 / JCM 13857 / NBRC 105044 / CNB-440).